The sequence spans 586 residues: Arginine--tRNA ligase (586 aa).

Residues 133–143 (ANPTGPLNIVS) carry the 'HIGH' region motif.

This sequence belongs to the class-I aminoacyl-tRNA synthetase family. Monomer.

The protein resides in the cytoplasm. The enzyme catalyses tRNA(Arg) + L-arginine + ATP = L-arginyl-tRNA(Arg) + AMP + diphosphate. This Leptospira interrogans serogroup Icterohaemorrhagiae serovar copenhageni (strain Fiocruz L1-130) protein is Arginine--tRNA ligase.